The following is a 257-amino-acid chain: Homeobox protein goosecoid (257 aa).

The segment at residues Lys-160 to Lys-219 is a DNA-binding region (homeobox). A disordered region spans residues Ala-213 to Ser-257. The span at Ser-241–Ser-257 shows a compositional bias: basic and acidic residues.

It belongs to the paired homeobox family. Bicoid subfamily.

It is found in the nucleus. Its function is as follows. Regulates chordin (CHRD). May play a role in spatial programing within discrete embryonic fields or lineage compartments during organogenesis. In concert with NKX3-2, plays a role in defining the structural components of the middle ear; required for the development of the entire tympanic ring. Probably involved in the regulatory networks that define neural crest cell fate specification and determine mesoderm cell lineages in mammals. In Gorilla gorilla gorilla (Western lowland gorilla), this protein is Homeobox protein goosecoid (GSC).